We begin with the raw amino-acid sequence, 335 residues long: MSSRMAGATLLRHLGPRLFAAEPVYSGLAASARGVMPAAARIFPARMASTSSAGADVKEGAAEKLPEPAATAAAAATDPQNKKAVVSYWGIQPPKLVKEDGTEWKWLSFRPWDTYTSDTSIDVTKHHEPKGLPDKLAYWTVRSLAVPRDLFFQRRHASHALLLETVAGVPGMVGGMLLHLRSLRRFEQSGGWIRALLEEAENERMHLMTFLEVMQPRWWERALVLAAQGVFFNAYFVGYLVSPKFAHRFVGYLEEEAVSSYTEYLKDLEAGKIENTPAPAIAIDYWRLPADATLKDVVTVIRADEAHHRDLNHFASDIQQQGMKLKDTPAPIGYH.

A mitochondrion-targeting transit peptide spans 1–47; it reads MSSRMAGATLLRHLGPRLFAAEPVYSGLAASARGVMPAAARIFPARM. Residues 160–180 form a helical membrane-spanning segment; it reads ALLLETVAGVPGMVGGMLLHL. Fe cation-binding residues include Glu164, Glu203, and His206. A helical transmembrane segment spans residues 222–242; sequence ALVLAAQGVFFNAYFVGYLVS. Residues Glu254, Glu305, and His308 each contribute to the Fe cation site.

This sequence belongs to the alternative oxidase family. It depends on Fe cation as a cofactor.

Its subcellular location is the mitochondrion inner membrane. It catalyses the reaction 2 a ubiquinol + O2 = 2 a ubiquinone + 2 H2O. In terms of biological role, catalyzes the cyanide-resistant oxidation of ubiquinol and the reduction of molecular oxygen to water, but does not translocate protons and consequently is not linked to oxidative phosphorylation. May increase respiration when the cytochrome respiratory pathway is restricted, or in response to low temperatures. The sequence is that of Ubiquinol oxidase 1b, mitochondrial from Oryza sativa subsp. japonica (Rice).